We begin with the raw amino-acid sequence, 877 residues long: Alanine--tRNA ligase (877 aa).

Positions 565, 569, 667, and 671 each coordinate Zn(2+).

This sequence belongs to the class-II aminoacyl-tRNA synthetase family. Requires Zn(2+) as cofactor.

It is found in the cytoplasm. The enzyme catalyses tRNA(Ala) + L-alanine + ATP = L-alanyl-tRNA(Ala) + AMP + diphosphate. Catalyzes the attachment of alanine to tRNA(Ala) in a two-step reaction: alanine is first activated by ATP to form Ala-AMP and then transferred to the acceptor end of tRNA(Ala). Also edits incorrectly charged Ser-tRNA(Ala) and Gly-tRNA(Ala) via its editing domain. In Acidithiobacillus ferridurans, this protein is Alanine--tRNA ligase.